The chain runs to 409 residues: LL-diaminopimelate aminotransferase (409 aa).

Tyr-15 and Gly-42 together coordinate substrate. Pyridoxal 5'-phosphate-binding positions include Tyr-72, 108-109 (AK), Tyr-132, Asn-186, Tyr-217, and 245-247 (SFS). 3 residues coordinate substrate: Lys-109, Tyr-132, and Asn-186. Lys-248 is subject to N6-(pyridoxal phosphate)lysine. 2 residues coordinate pyridoxal 5'-phosphate: Arg-256 and Asn-291. Substrate-binding residues include Asn-291 and Arg-387.

Belongs to the class-I pyridoxal-phosphate-dependent aminotransferase family. LL-diaminopimelate aminotransferase subfamily. In terms of assembly, homodimer. Pyridoxal 5'-phosphate is required as a cofactor.

It catalyses the reaction (2S,6S)-2,6-diaminopimelate + 2-oxoglutarate = (S)-2,3,4,5-tetrahydrodipicolinate + L-glutamate + H2O + H(+). It participates in amino-acid biosynthesis; L-lysine biosynthesis via DAP pathway; LL-2,6-diaminopimelate from (S)-tetrahydrodipicolinate (aminotransferase route): step 1/1. In terms of biological role, involved in the synthesis of meso-diaminopimelate (m-DAP or DL-DAP), required for both lysine and peptidoglycan biosynthesis. Catalyzes the direct conversion of tetrahydrodipicolinate to LL-diaminopimelate. The chain is LL-diaminopimelate aminotransferase from Phocaeicola vulgatus (strain ATCC 8482 / DSM 1447 / JCM 5826 / CCUG 4940 / NBRC 14291 / NCTC 11154) (Bacteroides vulgatus).